The chain runs to 378 residues: Protein FAM185A (378 aa).

The protein is Protein FAM185A (Fam185a) of Mus musculus (Mouse).